The primary structure comprises 152 residues: MKCPYCSYNESKVVDSRSTEDSISIRRRRECLECGKRYTTYEKIESVPILVIKKNLNREYFDRDKIVNGMIKACQKRPVSRQQIEEIVDEIEKKINNSMITEVKSEYIGELIMEKLKDIDEVSYVRFASVYRQFKDINTFMEEIKKLKDREL.

A zinc finger lies at 3–34 (CPYCSYNESKVVDSRSTEDSISIRRRRECLEC). Residues 49 to 139 (ILVIKKNLNR…VYRQFKDINT (91 aa)) enclose the ATP-cone domain.

It belongs to the NrdR family. Zn(2+) serves as cofactor.

In terms of biological role, negatively regulates transcription of bacterial ribonucleotide reductase nrd genes and operons by binding to NrdR-boxes. The sequence is that of Transcriptional repressor NrdR from Clostridium tetani (strain Massachusetts / E88).